The sequence spans 300 residues: N-acetylmuramic acid 6-phosphate etherase (300 aa).

The region spanning 57 to 220 (VSAAFARQGR…SSAAMIRSGK (164 aa)) is the SIS domain. The Proton donor role is filled by E85. E116 is an active-site residue.

Belongs to the GCKR-like family. MurNAc-6-P etherase subfamily. In terms of assembly, homodimer.

The enzyme catalyses N-acetyl-D-muramate 6-phosphate + H2O = N-acetyl-D-glucosamine 6-phosphate + (R)-lactate. The protein operates within amino-sugar metabolism; N-acetylmuramate degradation. Its pathway is amino-sugar metabolism; 1,6-anhydro-N-acetylmuramate degradation. It functions in the pathway cell wall biogenesis; peptidoglycan recycling. Its function is as follows. Specifically catalyzes the cleavage of the D-lactyl ether substituent of MurNAc 6-phosphate, producing GlcNAc 6-phosphate and D-lactate. Together with AnmK, is also required for the utilization of anhydro-N-acetylmuramic acid (anhMurNAc) either imported from the medium or derived from its own cell wall murein, and thus plays a role in cell wall recycling. The protein is N-acetylmuramic acid 6-phosphate etherase of Edwardsiella ictaluri (strain 93-146).